The sequence spans 82 residues: Histidine-rich protein (82 aa).

This Plasmodium falciparum (isolate fcm17 / Senegal) protein is Histidine-rich protein.